The chain runs to 1275 residues: ATP-dependent helicase/nuclease subunit A (1275 aa).

The 478-residue stretch at 4–481 (PKWTKEQLEV…IMLYKNFRSR (478 aa)) folds into the UvrD-like helicase ATP-binding domain. 25 to 32 (AAAGSGKT) serves as a coordination point for ATP. The UvrD-like helicase C-terminal domain maps to 531–839 (TEIHLIQKDN…RIMSIHKSKG (309 aa)).

The protein belongs to the helicase family. AddA subfamily. As to quaternary structure, heterodimer of AddA and AddB/RexB. It depends on Mg(2+) as a cofactor.

The catalysed reaction is Couples ATP hydrolysis with the unwinding of duplex DNA by translocating in the 3'-5' direction.. It carries out the reaction ATP + H2O = ADP + phosphate + H(+). In terms of biological role, the heterodimer acts as both an ATP-dependent DNA helicase and an ATP-dependent, dual-direction single-stranded exonuclease. Recognizes the chi site generating a DNA molecule suitable for the initiation of homologous recombination. The AddA nuclease domain is required for chi fragment generation; this subunit has the helicase and 3' -&gt; 5' nuclease activities. The polypeptide is ATP-dependent helicase/nuclease subunit A (Clostridioides difficile (strain 630) (Peptoclostridium difficile)).